The following is a 72-amino-acid chain: Cytochrome c oxidase subunit 2 (72 aa).

Residues 1-14 lie on the Mitochondrial intermembrane side of the membrane; that stretch reads MAHPSQLGFQDAAS. The helical transmembrane segment at 15–45 threads the bilayer; the sequence is PVMEELLHFHDHALMIVFLISTLVLYIIVAM. At 46–72 the chain is on the mitochondrial matrix side; that stretch reads VSTKLTNKHILDSQEVEIVWTILPAVI.

This sequence belongs to the cytochrome c oxidase subunit 2 family. In terms of assembly, component of the cytochrome c oxidase (complex IV, CIV), a multisubunit enzyme composed of 14 subunits. The complex is composed of a catalytic core of 3 subunits MT-CO1, MT-CO2 and MT-CO3, encoded in the mitochondrial DNA, and 11 supernumerary subunits COX4I, COX5A, COX5B, COX6A, COX6B, COX6C, COX7A, COX7B, COX7C, COX8 and NDUFA4, which are encoded in the nuclear genome. The complex exists as a monomer or a dimer and forms supercomplexes (SCs) in the inner mitochondrial membrane with NADH-ubiquinone oxidoreductase (complex I, CI) and ubiquinol-cytochrome c oxidoreductase (cytochrome b-c1 complex, complex III, CIII), resulting in different assemblies (supercomplex SCI(1)III(2)IV(1) and megacomplex MCI(2)III(2)IV(2)). Found in a complex with TMEM177, COA6, COX18, COX20, SCO1 and SCO2. Interacts with TMEM177 in a COX20-dependent manner. Interacts with COX20. Interacts with COX16. The cofactor is Cu cation.

The protein resides in the mitochondrion inner membrane. It catalyses the reaction 4 Fe(II)-[cytochrome c] + O2 + 8 H(+)(in) = 4 Fe(III)-[cytochrome c] + 2 H2O + 4 H(+)(out). Functionally, component of the cytochrome c oxidase, the last enzyme in the mitochondrial electron transport chain which drives oxidative phosphorylation. The respiratory chain contains 3 multisubunit complexes succinate dehydrogenase (complex II, CII), ubiquinol-cytochrome c oxidoreductase (cytochrome b-c1 complex, complex III, CIII) and cytochrome c oxidase (complex IV, CIV), that cooperate to transfer electrons derived from NADH and succinate to molecular oxygen, creating an electrochemical gradient over the inner membrane that drives transmembrane transport and the ATP synthase. Cytochrome c oxidase is the component of the respiratory chain that catalyzes the reduction of oxygen to water. Electrons originating from reduced cytochrome c in the intermembrane space (IMS) are transferred via the dinuclear copper A center (CU(A)) of subunit 2 and heme A of subunit 1 to the active site in subunit 1, a binuclear center (BNC) formed by heme A3 and copper B (CU(B)). The BNC reduces molecular oxygen to 2 water molecules using 4 electrons from cytochrome c in the IMS and 4 protons from the mitochondrial matrix. This is Cytochrome c oxidase subunit 2 (mt-co2) from Atractosteus spatula (Alligator gar).